The sequence spans 967 residues: Vitamin B12-dependent ribonucleotide reductase (967 aa).

The segment at 1 to 23 (MTETASGPARSSRAKGTKAGKGL) is disordered. Substrate contacts are provided by residues Ser-143, 159-160 (AC), Gly-188, 364-368 (NPCSE), and 554-558 (PTGTI). A disulfide bond links Cys-160 and Cys-377. Residue Asn-364 is the Proton acceptor of the active site. Cys-366 serves as the catalytic Cysteine radical intermediate. Glu-368 acts as the Proton acceptor in catalysis.

It belongs to the ribonucleoside diphosphate reductase class-2 family. It depends on adenosylcob(III)alamin as a cofactor.

It catalyses the reaction a 2'-deoxyribonucleoside 5'-diphosphate + [thioredoxin]-disulfide + H2O = a ribonucleoside 5'-diphosphate + [thioredoxin]-dithiol. Catalyzes the reduction of ribonucleotides to deoxyribonucleotides. May function to provide a pool of deoxyribonucleotide precursors for DNA repair during oxygen limitation and/or for immediate growth after restoration of oxygen. In Streptomyces coelicolor (strain ATCC BAA-471 / A3(2) / M145), this protein is Vitamin B12-dependent ribonucleotide reductase (nrdJ).